Reading from the N-terminus, the 371-residue chain is Probable L-aspartate decarboxylase (371 aa).

K232 carries the N6-(pyridoxal phosphate)lysine modification.

It belongs to the group II decarboxylase family. MfnA subfamily. Pyridoxal 5'-phosphate is required as a cofactor.

The catalysed reaction is L-aspartate + H(+) = beta-alanine + CO2. Its pathway is cofactor biosynthesis; coenzyme A biosynthesis. Catalyzes the decarboxylation of L-aspartate to produce beta-alanine. In Pyrococcus furiosus (strain ATCC 43587 / DSM 3638 / JCM 8422 / Vc1), this protein is Probable L-aspartate decarboxylase.